We begin with the raw amino-acid sequence, 221 residues long: Imidazole glycerol phosphate synthase subunit HisH (221 aa).

The region spanning 9-221 (DVVIIDTGCA…QILGNFLKMQ (213 aa)) is the Glutamine amidotransferase type-1 domain. Catalysis depends on cysteine 84, which acts as the Nucleophile. Residues histidine 202 and glutamate 204 contribute to the active site.

In terms of assembly, heterodimer of HisH and HisF.

Its subcellular location is the cytoplasm. It catalyses the reaction 5-[(5-phospho-1-deoxy-D-ribulos-1-ylimino)methylamino]-1-(5-phospho-beta-D-ribosyl)imidazole-4-carboxamide + L-glutamine = D-erythro-1-(imidazol-4-yl)glycerol 3-phosphate + 5-amino-1-(5-phospho-beta-D-ribosyl)imidazole-4-carboxamide + L-glutamate + H(+). The catalysed reaction is L-glutamine + H2O = L-glutamate + NH4(+). Its pathway is amino-acid biosynthesis; L-histidine biosynthesis; L-histidine from 5-phospho-alpha-D-ribose 1-diphosphate: step 5/9. IGPS catalyzes the conversion of PRFAR and glutamine to IGP, AICAR and glutamate. The HisH subunit catalyzes the hydrolysis of glutamine to glutamate and ammonia as part of the synthesis of IGP and AICAR. The resulting ammonia molecule is channeled to the active site of HisF. In Shewanella oneidensis (strain ATCC 700550 / JCM 31522 / CIP 106686 / LMG 19005 / NCIMB 14063 / MR-1), this protein is Imidazole glycerol phosphate synthase subunit HisH.